The sequence spans 259 residues: 3-dehydroquinate dehydratase (259 aa).

3-dehydroquinate-binding positions include 50-52 (EWR) and arginine 86. Histidine 147 acts as the Proton donor/acceptor in catalysis. Residue lysine 174 is the Schiff-base intermediate with substrate of the active site. Residues arginine 216, serine 235, and glutamine 239 each contribute to the 3-dehydroquinate site.

This sequence belongs to the type-I 3-dehydroquinase family. Homodimer.

The catalysed reaction is 3-dehydroquinate = 3-dehydroshikimate + H2O. It participates in metabolic intermediate biosynthesis; chorismate biosynthesis; chorismate from D-erythrose 4-phosphate and phosphoenolpyruvate: step 3/7. Involved in the third step of the chorismate pathway, which leads to the biosynthesis of aromatic amino acids. Catalyzes the cis-dehydration of 3-dehydroquinate (DHQ) and introduces the first double bond of the aromatic ring to yield 3-dehydroshikimate. This chain is 3-dehydroquinate dehydratase, found in Geobacillus sp. (strain WCH70).